A 397-amino-acid polypeptide reads, in one-letter code: Acetate kinase (397 aa).

Asparagine 8 lines the Mg(2+) pocket. ATP is bound at residue lysine 15. Arginine 89 is a binding site for substrate. Aspartate 146 (proton donor/acceptor) is an active-site residue. Residues 206-210 (HLGNG), 281-283 (DLR), and 329-333 (GIGEN) contribute to the ATP site. Glutamate 382 serves as a coordination point for Mg(2+).

The protein belongs to the acetokinase family. In terms of assembly, homodimer. Mg(2+) is required as a cofactor. Mn(2+) serves as cofactor.

Its subcellular location is the cytoplasm. The enzyme catalyses acetate + ATP = acetyl phosphate + ADP. The protein operates within metabolic intermediate biosynthesis; acetyl-CoA biosynthesis; acetyl-CoA from acetate: step 1/2. Catalyzes the formation of acetyl phosphate from acetate and ATP. Can also catalyze the reverse reaction. The protein is Acetate kinase of Anoxybacillus flavithermus (strain DSM 21510 / WK1).